The following is a 751-amino-acid chain: Photosystem I P700 chlorophyll a apoprotein A1 (751 aa).

A run of 8 helical transmembrane segments spans residues 73-96 (VFSA…FHGA), 159-182 (LYIT…FHYH), 198-222 (LNHH…HVSL), 294-312 (VAHH…GHMY), 349-372 (WHAQ…QHMY), 388-414 (LSLF…IFMV), 436-458 (AIIS…LYIH), and 533-551 (FLVH…LILL). 2 residues coordinate [4Fe-4S] cluster: cysteine 575 and cysteine 584. 2 consecutive transmembrane segments (helical) span residues 591–612 (HVFL…HFSW) and 665–687 (LSAY…MFLF). Histidine 676 provides a ligand contact to chlorophyll a'. Chlorophyll a contacts are provided by methionine 684 and tyrosine 692. Tryptophan 693 serves as a coordination point for phylloquinone. The chain crosses the membrane as a helical span at residues 725-745 (AVGVAHYLLGGIATTWSFFLA).

This sequence belongs to the PsaA/PsaB family. The PsaA/B heterodimer binds the P700 chlorophyll special pair and subsequent electron acceptors. PSI consists of a core antenna complex that captures photons, and an electron transfer chain that converts photonic excitation into a charge separation. The eukaryotic PSI reaction center is composed of at least 11 subunits. Requires P700 is a chlorophyll a/chlorophyll a' dimer, A0 is one or more chlorophyll a, A1 is one or both phylloquinones and FX is a shared 4Fe-4S iron-sulfur center. as cofactor.

It is found in the plastid. Its subcellular location is the chloroplast thylakoid membrane. It carries out the reaction reduced [plastocyanin] + hnu + oxidized [2Fe-2S]-[ferredoxin] = oxidized [plastocyanin] + reduced [2Fe-2S]-[ferredoxin]. PsaA and PsaB bind P700, the primary electron donor of photosystem I (PSI), as well as the electron acceptors A0, A1 and FX. PSI is a plastocyanin/cytochrome c6-ferredoxin oxidoreductase, converting photonic excitation into a charge separation, which transfers an electron from the donor P700 chlorophyll pair to the spectroscopically characterized acceptors A0, A1, FX, FA and FB in turn. Oxidized P700 is reduced on the lumenal side of the thylakoid membrane by plastocyanin or cytochrome c6. The chain is Photosystem I P700 chlorophyll a apoprotein A1 from Euglena gracilis.